A 361-amino-acid chain; its full sequence is Ribosomal RNA large subunit methyltransferase M (361 aa).

Residues Ser-187, 220-223 (CPGG), Asp-239, Asp-259, and Asp-276 each bind S-adenosyl-L-methionine. The active-site Proton acceptor is the Lys-305.

This sequence belongs to the class I-like SAM-binding methyltransferase superfamily. RNA methyltransferase RlmE family. RlmM subfamily. As to quaternary structure, monomer.

The protein resides in the cytoplasm. It carries out the reaction cytidine(2498) in 23S rRNA + S-adenosyl-L-methionine = 2'-O-methylcytidine(2498) in 23S rRNA + S-adenosyl-L-homocysteine + H(+). Catalyzes the 2'-O-methylation at nucleotide C2498 in 23S rRNA. In Shewanella baltica (strain OS185), this protein is Ribosomal RNA large subunit methyltransferase M.